A 202-amino-acid polypeptide reads, in one-letter code: 3-isopropylmalate dehydratase small subunit (202 aa).

Belongs to the LeuD family. LeuD type 1 subfamily. As to quaternary structure, heterodimer of LeuC and LeuD.

It catalyses the reaction (2R,3S)-3-isopropylmalate = (2S)-2-isopropylmalate. The protein operates within amino-acid biosynthesis; L-leucine biosynthesis; L-leucine from 3-methyl-2-oxobutanoate: step 2/4. Functionally, catalyzes the isomerization between 2-isopropylmalate and 3-isopropylmalate, via the formation of 2-isopropylmaleate. In Blochmanniella pennsylvanica (strain BPEN), this protein is 3-isopropylmalate dehydratase small subunit.